The sequence spans 273 residues: Shikimate dehydrogenase (NADP(+)) (273 aa).

Residues 19 to 21 and Thr66 each bind shikimate; that span reads SQS. Lys70 serves as the catalytic Proton acceptor. Residue Glu82 coordinates NADP(+). Residues Asn91 and Asp107 each contribute to the shikimate site. Residues 131–135 and Met217 each bind NADP(+); that span reads GAGGA. Tyr219 lines the shikimate pocket. Residue Gly241 participates in NADP(+) binding.

This sequence belongs to the shikimate dehydrogenase family. In terms of assembly, homodimer.

The catalysed reaction is shikimate + NADP(+) = 3-dehydroshikimate + NADPH + H(+). It functions in the pathway metabolic intermediate biosynthesis; chorismate biosynthesis; chorismate from D-erythrose 4-phosphate and phosphoenolpyruvate: step 4/7. Involved in the biosynthesis of the chorismate, which leads to the biosynthesis of aromatic amino acids. Catalyzes the reversible NADPH linked reduction of 3-dehydroshikimate (DHSA) to yield shikimate (SA). The sequence is that of Shikimate dehydrogenase (NADP(+)) from Buchnera aphidicola subsp. Schizaphis graminum (strain Sg).